The primary structure comprises 147 residues: Ponticulin-like protein C5 (147 aa).

The signal sequence occupies residues 1-20; sequence MKLNNSLLLLIVAIIASSNA. Asn-118 is lipidated: GPI-like-anchor amidated asparagine. Asn-118 is a glycosylation site (N-linked (GlcNAc...) asparagine). The propeptide at 119-147 is removed in mature form; that stretch reads SSESDSSDSTRIGASFALFALALLSMLAL.

Belongs to the ponticulin family. The GPI-like-anchor contains a phosphoceramide group, rather than a phosphatidyl group.

The protein resides in the cell membrane. The polypeptide is Ponticulin-like protein C5 (ponC5) (Dictyostelium discoideum (Social amoeba)).